The primary structure comprises 332 residues: Methylthioribose-1-phosphate isomerase (332 aa).

Substrate is bound by residues 44 to 46 (RGA), Arg87, and Gln192. Asp233 functions as the Proton donor in the catalytic mechanism. 243–244 (NK) serves as a coordination point for substrate.

Belongs to the eIF-2B alpha/beta/delta subunits family. MtnA subfamily.

The enzyme catalyses 5-(methylsulfanyl)-alpha-D-ribose 1-phosphate = 5-(methylsulfanyl)-D-ribulose 1-phosphate. Its pathway is amino-acid biosynthesis; L-methionine biosynthesis via salvage pathway; L-methionine from S-methyl-5-thio-alpha-D-ribose 1-phosphate: step 1/6. In terms of biological role, catalyzes the interconversion of methylthioribose-1-phosphate (MTR-1-P) into methylthioribulose-1-phosphate (MTRu-1-P). This chain is Methylthioribose-1-phosphate isomerase, found in Dehalococcoides mccartyi (strain ATCC BAA-2100 / JCM 16839 / KCTC 5957 / BAV1).